The chain runs to 234 residues: MAIPLLYYPYSSQNHRVNSFEIKGNDEQPRIFSTDSLPTSSEMDEIIWAAYRQIFSEHQILKFNRDTYLESQLRFNQITVREFIRGLLLSERFRILNYDVNNNYRFSEMCVQRVLGRDIYNDKEKIAWSIVLCTRGIKAFVDSLVNSKEYEENFGDNTVPYQKRRVIFQRSKGEVPFNLKTPRYGSDFKERLGMPQYAWQGAIRTFRPQEIKPRPGDPVLYLDMSRELLFSRFR.

The region spanning 11-191 (SSQNHRVNSF…PRYGSDFKER (181 aa)) is the PBS-linker domain.

The protein belongs to the phycobilisome linker protein family. As to quaternary structure, the phycobilisome is a hemidiscoidal structure that is composed of two distinct substructures: a core complex and a number of rods radiating from the core.

The protein localises to the plastid. It localises to the chloroplast thylakoid membrane. Rod-core linker protein required for attachment of phycocyanin to allophycocyanin in cores of phycobilisomes. Its function is as follows. Linker polypeptides determine the state of aggregation and the location of the disk-shaped phycobiliprotein units within the phycobilisome and modulate their spectroscopic properties in order to mediate a directed and optimal energy transfer. The sequence is that of Phycobilisome rod-core linker polypeptide cpcG (cpcG) from Cyanidium caldarium (Red alga).